The chain runs to 458 residues: Argininosuccinate lyase (458 aa).

This sequence belongs to the lyase 1 family. Argininosuccinate lyase subfamily.

It is found in the cytoplasm. It carries out the reaction 2-(N(omega)-L-arginino)succinate = fumarate + L-arginine. Its pathway is amino-acid biosynthesis; L-arginine biosynthesis; L-arginine from L-ornithine and carbamoyl phosphate: step 3/3. This Haemophilus ducreyi (strain 35000HP / ATCC 700724) protein is Argininosuccinate lyase.